Here is a 425-residue protein sequence, read N- to C-terminus: Alpha/beta hydrolase xenA (425 aa).

Aspartate 366 is an active-site residue.

The protein belongs to the AB hydrolase superfamily. FUS2 hydrolase family. Homodimer.

Its pathway is mycotoxin biosynthesis. In terms of biological role, alpha/beta hydrolase; part of the gene cluster that mediates the biosynthesis of xenoacremones such as xenoacremone A, a compound that shows inhibitory activity toward the PI3K/AKT signaling pathway and which has the ability to induce apoptosis of A549 lung cancer cells. Within the pathway, cooperation of the hybrid PKS-NRPS xenE and the trans-acting enoyl reductase xenG is responsible for the formation of the reduced tyrosine-nonaketide derivative. The alpha/beta hydrolase xenA then accelerates intramolecular nucleophilic attack to give a pyrrolidone derivative. Subsequently, three enzymes, xenF, xenD, and xenC, coordinately participate in the conversion to xenoacremone B. XenF catalyzes sigmatropic rearrangement to form an A-ring, which leads to an unusual intermediate with a hexane ring, which is required for the formation of the tricarbocyclic product. Epoxidation catalyzed by xenD and the formation of the paracyclophane ether catalyzed by xenC initiate a spontaneous intramolecular Diels-Alder (IMDA) reaction to yield xenoacremone B. Spontaneous hydration of xenoacremone B leads to the formation of xenoacremone A, which undergoes subsequent methylation to afford xenoacremone C. In Xenoacremonium sinensis (Endophyte fungus), this protein is Alpha/beta hydrolase xenA.